The chain runs to 765 residues: uncharacterized protein (765 aa).

Disordered regions lie at residues 9-61, 128-164, 265-289, 301-373, 409-526, 540-560, and 668-765; these read NDGN…PSSV, QQQQPVKTVNKKNSKSNKSNANKNNNNINNNNNNYTS, TTSSVNANSNINPYPNSNSSINITT, WTTT…TYIQ, IGNN…NQSN, PTKKQIKKQSQPQEKLSKYSE, and NSNT…KSRI. Composition is skewed to low complexity over residues 40–61 and 143–161; these read SNNINNNNNNNNNNKSSIPSSV and SNKSNANKNNNNINNNNNN. Composition is skewed to low complexity over residues 301–311, 325–344, 353–373, 414–428, 438–485, 495–504, and 513–526; these read WTTTKPTSSTK, YDSPQSSPPRQSSLLISTSS, IQPTNIVQSSSSSFSSPTYIQ, SNHTSLTPNLTSLST, NNNN…INNN, DNQSSYSSPD, and SQQQQQQNNNNQSN. Residues 668–745 are compositionally biased toward low complexity; sequence NSNTDNYNYY…NNSRNNYNNN (78 aa).

This is an uncharacterized protein from Dictyostelium discoideum (Social amoeba).